The chain runs to 169 residues: Peptide deformylase (169 aa).

2 residues coordinate Fe cation: C91 and H133. The active site involves E134. H137 contributes to the Fe cation binding site.

This sequence belongs to the polypeptide deformylase family. The cofactor is Fe(2+).

The catalysed reaction is N-terminal N-formyl-L-methionyl-[peptide] + H2O = N-terminal L-methionyl-[peptide] + formate. Its function is as follows. Removes the formyl group from the N-terminal Met of newly synthesized proteins. Requires at least a dipeptide for an efficient rate of reaction. N-terminal L-methionine is a prerequisite for activity but the enzyme has broad specificity at other positions. The sequence is that of Peptide deformylase from Enterobacter sp. (strain 638).